The sequence spans 1121 residues: Brassinosteroid LRR receptor kinase BRI1 (1121 aa).

The first 24 residues, 1 to 24 (MDSLWAAIAALFVAAAVVVRGAAA), serve as a signal peptide directing secretion. The Cys pair 1 motif lies at 54–61 (CRFPGAGC). LRR repeat units follow at residues 90-114 (LGSV…GGAR), 116-142 (GSKL…ALAS), 144-167 (CGGL…GGGG), 170-193 (FAGL…RWMV), 197-221 (VGAV…NCSG), 223-243 (QYLD…ALSD), 244-268 (CRGL…IAGL), 269-292 (TSLN…AFAK), 294-317 (QQLT…VASL), 318-341 (PELQ…LCQD), 343-367 (NSKL…VSNC), 369-391 (SLVS…LGDL), 392-415 (GNLQ…LSRI), 416-439 (QGLE…LAKC), 441-463 (KLNW…LGKL), 464-487 (SYLA…LGDC), and 489-511 (SLVW…LAKQ). N102 carries an N-linked (GlcNAc...) asparagine glycan. Residue N151 is glycosylated (N-linked (GlcNAc...) asparagine). N-linked (GlcNAc...) asparagine glycosylation is present at N218. Residues N251, N275, N280, and N307 are each glycosylated (N-linked (GlcNAc...) asparagine). N-linked (GlcNAc...) asparagine glycans are attached at residues N366 and N381. N473 and N501 each carry an N-linked (GlcNAc...) asparagine glycan. Y525 serves as a coordination point for brassinolide. One copy of the LRR 18 repeat lies at 541 to 564 (GSLLEFTSIRPDDLSRMPSKKLCN). N-linked (GlcNAc...) asparagine glycosylation is present at N564. Y569 is a brassinolide binding site. An N-linked (GlcNAc...) asparagine glycan is attached at N580. LRR repeat units lie at residues 580-603 (NGSM…ELGD), 604-628 (MFYL…LAEA), 629-651 (KKLA…SFSA), and 652-676 (LSLS…SLAT). N-linked (GlcNAc...) asparagine glycans are attached at residues N658, N665, and N684. The short motif at 689 to 696 (CGFPLPPC) is the Cys pair 2 element. The segment at 693-712 (LPPCDHSSPRSSNDHQSHRR) is disordered. A helical membrane pass occupies residues 719 to 739 (SIAMGLLFSLFCIIVIIIAIG). One can recognise a Protein kinase domain in the interval 807 to 1083 (FHIACQIGSG…LKVMAMFKEI (277 aa)). ATP is bound by residues 813-821 (IGSGGFGDV), K835, 881-883 (DYM), 887-890 (SLED), 933-938 (DMKSSN), and D951. Catalysis depends on D933, which acts as the Proton acceptor.

This sequence belongs to the protein kinase superfamily. Ser/Thr protein kinase family. In terms of assembly, interacts with BIP103 and BIP131. Interacts with BAK1. Interacts with BSK3. Interacts with SERK2. As to expression, highly expressed in shoots. Expressed at low levels in roots.

It localises to the cell membrane. The catalysed reaction is L-seryl-[protein] + ATP = O-phospho-L-seryl-[protein] + ADP + H(+). It catalyses the reaction L-threonyl-[protein] + ATP = O-phospho-L-threonyl-[protein] + ADP + H(+). Receptor kinase involved brassinosteroid (BR) signal transduction. Regulates, in response to BR binding, a signaling cascade involved in plant development, promotion of cell elongation and flowering. Activates BR signaling by targeting and phosphorylating BSK3, a positive regulator of BR signaling. Forms at the plasma membrane a receptor complex with BAK1 which is activated in response to brassinolide. Phosphorylates BAK1. Phosphorylates REM4.1, which reduces REM4.1 binding affinity to BAK1 and allows the formation and subsequent activation of the BRI1-BAK1 receptor complex. Functions in various growth and developmental processes, such as internode elongation, bending of the lamina joint and skotomorphogenesis. Functions in internode elongation by inducing the formation of the intercalary meristem and the longitudinal elongation of internode cells. Involved in organ development through the control of cell division and elongation. Does not seem essential for organ pattern formation or organ initiation. The polypeptide is Brassinosteroid LRR receptor kinase BRI1 (Oryza sativa subsp. japonica (Rice)).